The chain runs to 362 residues: MTQPAFFKRPLPSTLAEIAASTGAQLVDASRGGIRIIGLASLDQAGPMHLAFFDNHKYAGQLAATKAGACLVSPRFEADVPAHVAVLRSKAPFRAFVSIARDFHGDALRPQSWFDNTAVAASAVIHPSAYLEDEVVIDPLAVIGPDVQIGRGSVIGSGAVIGPGVRIGRDCNVGAGTTIQATLIGNNVLIHPGCHIGQDGYGFIFFGSEGHVKVPQTGRVLIQNDVEIGAGTTIDRGSLRDTVIGEGTKIDNQVQIGHNVTIGRRCLLAAQIGLAGSLTIGDNVALGAKVGINNHLHIGDGAQVTAMSGVKDDIPANGRWGGYFAKPTRQWFRELLAVERLVRDGAPDAGSPKAAPKDRVIE.

H258 serves as the catalytic Proton acceptor.

This sequence belongs to the transferase hexapeptide repeat family. LpxD subfamily. In terms of assembly, homotrimer.

It carries out the reaction a UDP-3-O-[(3R)-3-hydroxyacyl]-alpha-D-glucosamine + a (3R)-hydroxyacyl-[ACP] = a UDP-2-N,3-O-bis[(3R)-3-hydroxyacyl]-alpha-D-glucosamine + holo-[ACP] + H(+). Its pathway is bacterial outer membrane biogenesis; LPS lipid A biosynthesis. Functionally, catalyzes the N-acylation of UDP-3-O-acylglucosamine using 3-hydroxyacyl-ACP as the acyl donor. Is involved in the biosynthesis of lipid A, a phosphorylated glycolipid that anchors the lipopolysaccharide to the outer membrane of the cell. The polypeptide is UDP-3-O-acylglucosamine N-acyltransferase 1 (Nitrobacter winogradskyi (strain ATCC 25391 / DSM 10237 / CIP 104748 / NCIMB 11846 / Nb-255)).